Here is a 402-residue protein sequence, read N- to C-terminus: CinA-like protein (402 aa).

Belongs to the CinA family.

The polypeptide is CinA-like protein (Escherichia coli O17:K52:H18 (strain UMN026 / ExPEC)).